Reading from the N-terminus, the 63-residue chain is UPF0434 protein BAV2101 (63 aa).

It belongs to the UPF0434 family.

The chain is UPF0434 protein BAV2101 from Bordetella avium (strain 197N).